A 475-amino-acid polypeptide reads, in one-letter code: Glutamyl-tRNA(Gln) amidotransferase subunit A (475 aa).

Residues K76 and S151 each act as charge relay system in the active site. S175 functions as the Acyl-ester intermediate in the catalytic mechanism.

Belongs to the amidase family. GatA subfamily. Heterotrimer of A, B and C subunits.

The enzyme catalyses L-glutamyl-tRNA(Gln) + L-glutamine + ATP + H2O = L-glutaminyl-tRNA(Gln) + L-glutamate + ADP + phosphate + H(+). Allows the formation of correctly charged Gln-tRNA(Gln) through the transamidation of misacylated Glu-tRNA(Gln) in organisms which lack glutaminyl-tRNA synthetase. The reaction takes place in the presence of glutamine and ATP through an activated gamma-phospho-Glu-tRNA(Gln). The polypeptide is Glutamyl-tRNA(Gln) amidotransferase subunit A (Pelodictyon phaeoclathratiforme (strain DSM 5477 / BU-1)).